The sequence spans 51 residues: Large ribosomal subunit protein eL39 (51 aa).

This sequence belongs to the eukaryotic ribosomal protein eL39 family.

The chain is Large ribosomal subunit protein eL39 from Methanosarcina barkeri (strain Fusaro / DSM 804).